Consider the following 217-residue polypeptide: 4-hydroxy-tetrahydrodipicolinate reductase (217 aa).

Residues 7-12 (GFKGKM), 71-73 (GTT), and 95-98 (SYNF) contribute to the NAD(+) site. Catalysis depends on His-127, which acts as the Proton donor/acceptor. His-128 contacts (S)-2,3,4,5-tetrahydrodipicolinate. Residue Lys-131 is the Proton donor of the active site. 137–138 (GT) lines the (S)-2,3,4,5-tetrahydrodipicolinate pocket.

This sequence belongs to the DapB family.

Its subcellular location is the cytoplasm. The catalysed reaction is (S)-2,3,4,5-tetrahydrodipicolinate + NAD(+) + H2O = (2S,4S)-4-hydroxy-2,3,4,5-tetrahydrodipicolinate + NADH + H(+). It catalyses the reaction (S)-2,3,4,5-tetrahydrodipicolinate + NADP(+) + H2O = (2S,4S)-4-hydroxy-2,3,4,5-tetrahydrodipicolinate + NADPH + H(+). Its pathway is amino-acid biosynthesis; L-lysine biosynthesis via DAP pathway; (S)-tetrahydrodipicolinate from L-aspartate: step 4/4. Functionally, catalyzes the conversion of 4-hydroxy-tetrahydrodipicolinate (HTPA) to tetrahydrodipicolinate. This Thermosipho africanus (strain TCF52B) protein is 4-hydroxy-tetrahydrodipicolinate reductase.